Consider the following 270-residue polypeptide: Esterase (270 aa).

Residues Ser127, Asp216, and His244 each act as charge relay system in the active site.

Belongs to the LovG family.

Its pathway is mycotoxin biosynthesis. In terms of biological role, esterase; part of the gene cluster that mediates the biosynthesis of the selective antifungal agent ascochitine, an o-quinone methide that plays a possible protective role against other microbial competitors in nature and is considered to be important for pathogenicity of legume-associated Didymella species. The pathway probably begins with the synthesis of a keto-aldehyde intermediate by the ascochitine non-reducing polyketide synthase pksAC from successive condensations of 4 malonyl-CoA units, presumably with a simple acetyl-CoA starter unit. Release of the keto-aldehyde intermediate is consistent with the presence of the C-terminal reductive release domain. The HR-PKS (orf7) probably makes a diketide starter unit which is passed to the non-reducing polyketide synthase pksAC for further extension, producing ascochital and ascochitine. The aldehyde dehydrogenase (orf1), the 2-oxoglutarate-dependent dioxygenase (orf3) and the dehydrogenase (orf9) are probably involved in subsequent oxidations of methyl groups to the carboxylic acid of the heterocyclic ring. The ascochitine gene cluster also includes a gene encoding a short peptide with a cupin domain (orf2) that is often found in secondary metabolite gene clusters and which function has still to be determined. The polypeptide is Esterase (Didymella fabae (Leaf and pod spot disease fungus)).